A 510-amino-acid chain; its full sequence is Archaeal glutamate synthase [NADPH] (510 aa).

4Fe-4S ferredoxin-type domains lie at Y10 to E37 and G38 to N68. Positions 19, 22, 25, 29, 48, 51, 54, and 58 each coordinate [4Fe-4S] cluster.

This sequence belongs to the glutamate synthase family. It depends on FMN as a cofactor.

It carries out the reaction 2 L-glutamate + NADP(+) = L-glutamine + 2-oxoglutarate + NADPH + H(+). In Methanocaldococcus jannaschii (strain ATCC 43067 / DSM 2661 / JAL-1 / JCM 10045 / NBRC 100440) (Methanococcus jannaschii), this protein is Archaeal glutamate synthase [NADPH].